The sequence spans 338 residues: Ketol-acid reductoisomerase (NADP(+)) (338 aa).

In terms of domain architecture, KARI N-terminal Rossmann spans 1–181 (MKVFYDKDCD…GGGRTGIIET (181 aa)). NADP(+) contacts are provided by residues 24 to 27 (YGSQ), Arg47, Ser50, Thr52, and 82 to 85 (DEFQ). Residue His107 is part of the active site. Gly133 provides a ligand contact to NADP(+). One can recognise a KARI C-terminal knotted domain in the interval 182 to 327 (TFKDETETDL…EQLRSMMPWI (146 aa)). Positions 190, 194, 226, and 230 each coordinate Mg(2+). Ser251 contributes to the substrate binding site.

The protein belongs to the ketol-acid reductoisomerase family. Requires Mg(2+) as cofactor.

It catalyses the reaction (2R)-2,3-dihydroxy-3-methylbutanoate + NADP(+) = (2S)-2-acetolactate + NADPH + H(+). It carries out the reaction (2R,3R)-2,3-dihydroxy-3-methylpentanoate + NADP(+) = (S)-2-ethyl-2-hydroxy-3-oxobutanoate + NADPH + H(+). It participates in amino-acid biosynthesis; L-isoleucine biosynthesis; L-isoleucine from 2-oxobutanoate: step 2/4. Its pathway is amino-acid biosynthesis; L-valine biosynthesis; L-valine from pyruvate: step 2/4. Involved in the biosynthesis of branched-chain amino acids (BCAA). Catalyzes an alkyl-migration followed by a ketol-acid reduction of (S)-2-acetolactate (S2AL) to yield (R)-2,3-dihydroxy-isovalerate. In the isomerase reaction, S2AL is rearranged via a Mg-dependent methyl migration to produce 3-hydroxy-3-methyl-2-ketobutyrate (HMKB). In the reductase reaction, this 2-ketoacid undergoes a metal-dependent reduction by NADPH to yield (R)-2,3-dihydroxy-isovalerate. This is Ketol-acid reductoisomerase (NADP(+)) from Pseudomonas putida (strain ATCC 700007 / DSM 6899 / JCM 31910 / BCRC 17059 / LMG 24140 / F1).